The following is a 791-amino-acid chain: DUF1769 family protein duc1 (791 aa).

Residues A158 to P189 form a disordered region. Positions S174–S184 are enriched in low complexity. The FFAT signature appears at R373 to E379. Phosphotyrosine is present on Y374. The residue at position 376 (T376) is a Phosphothreonine. 3 disordered regions span residues Q381–R505, N542–K606, and P630–P658. Residues L415–S426 are compositionally biased toward basic residues. The segment covering S444–A453 has biased composition (low complexity). Residues K455–I473 are compositionally biased toward basic and acidic residues. Phosphoserine is present on residues S477 and S493. Positions S477–K487 are enriched in basic residues. A compositionally biased stretch (polar residues) spans E555–P564. The residue at position 574 (S574) is a Phosphoserine. Basic and acidic residues predominate over residues S574 to D586. The span at E587–Q601 shows a compositional bias: polar residues.

Belongs to the UPF0590 family. In terms of assembly, interacts (via FFAT-motif) with scs2 (via MSP domain); the interaction is direct and serves to restrict the localization of duc1 to areas of cell membrane-endoplasmic reticulum contact sites, and away from the cell division site.

Its subcellular location is the cell membrane. In terms of biological role, promotes the proper distribution of phosphatidylinositol 4,5-bisphosphate (PtdIns(4,5)P2/PIP2) synthesis at the cell membrane. May bind phosphatidylinositol 4,5-bisphosphate (PtdIns(4,5)P2/PIP2) and is required for robust anchoring of the contractile ring to the cell membrane. The polypeptide is DUF1769 family protein duc1 (Schizosaccharomyces pombe (strain 972 / ATCC 24843) (Fission yeast)).